The following is a 59-amino-acid chain: Large ribosomal subunit protein bL32 (59 aa).

This sequence belongs to the bacterial ribosomal protein bL32 family.

The sequence is that of Large ribosomal subunit protein bL32 from Limosilactobacillus reuteri (strain DSM 20016) (Lactobacillus reuteri).